The sequence spans 89 residues: GTP cyclohydrolase 1 feedback regulatory protein (89 aa).

Belongs to the GFRP family. In terms of assembly, homopentamer. Forms a complex with GCH1 where a GCH1 homodecamer is sandwiched by two GFRP homopentamers.

It is found in the nucleus. Its subcellular location is the nucleus membrane. The protein localises to the cytoplasm. It localises to the cytosol. In terms of biological role, mediates tetrahydrobiopterin inhibition of GTP cyclohydrolase 1. In Danio rerio (Zebrafish), this protein is GTP cyclohydrolase 1 feedback regulatory protein (gchfr).